Reading from the N-terminus, the 520-residue chain is Nuclear GTP-binding protein NUG1 (520 aa).

Composition is skewed to basic residues over residues methionine 1–threonine 13 and lysine 21–alanine 34. The segment at methionine 1–asparagine 53 is disordered. The span at lysine 35–proline 48 shows a compositional bias: basic and acidic residues. The CP-type G domain maps to tyrosine 165–proline 343. GTP contacts are provided by residues asparagine 213–aspartate 216, glycine 287–serine 294, and aspartate 336–glycine 339. The residue at position 337 (serine 337) is a Phosphoserine.

The protein belongs to the TRAFAC class YlqF/YawG GTPase family.

The protein resides in the nucleus. In terms of biological role, GTPase required for 60S ribosomal subunit export to the cytoplasm. The chain is Nuclear GTP-binding protein NUG1 (NUG1) from Saccharomyces cerevisiae (strain ATCC 204508 / S288c) (Baker's yeast).